The primary structure comprises 61 residues: Translational regulator CsrA (61 aa).

The protein belongs to the CsrA/RsmA family. In terms of assembly, homodimer; the beta-strands of each monomer intercalate to form a hydrophobic core, while the alpha-helices form wings that extend away from the core.

The protein resides in the cytoplasm. In terms of biological role, a key translational regulator that binds mRNA to regulate translation initiation and/or mRNA stability. Mediates global changes in gene expression, shifting from rapid growth to stress survival by linking envelope stress, the stringent response and the catabolite repression systems. Usually binds in the 5'-UTR; binding at or near the Shine-Dalgarno sequence prevents ribosome-binding, repressing translation, binding elsewhere in the 5'-UTR can activate translation and/or stabilize the mRNA. Its function is antagonized by small RNA(s). The protein is Translational regulator CsrA of Actinobacillus succinogenes (strain ATCC 55618 / DSM 22257 / CCUG 43843 / 130Z).